Reading from the N-terminus, the 314-residue chain is BRCA2 and CDKN1A-interacting protein (314 aa).

The tract at residues 1-56 (MASRSKRRAVESGVPQPPDPPVQRDEEEEKEVENEDEDDDDSDKEKDEEDEVIDEE) is disordered. Acidic residues predominate over residues 25–56 (DEEEEKEVENEDEDDDDSDKEKDEEDEVIDEE). Phosphoserine is present on residues S42 and S112. An interaction with BRCA2 region spans residues 59-167 (IEFEAYSLSD…EKSMVEQLDK (109 aa)). Residues 161 to 259 (MVEQLDKFLN…NAEEEFFYEK (99 aa)) are interaction with CDKN1A. S281 carries the phosphoserine modification.

The protein belongs to the BCP1 family. Interacts with BRCA2, CDKN1A and MTDH/LYRIC. Isoform 2/alpha, but not isoform 1/beta, interacts with DCTN1/p150-glued and ACTR1A/ARP1. Both isoform 1 and isoform 2 interact with alpha-, beta- and gamma-tubulins. Interacts with TENT5C; the interaction has no effect on TENT5C poly(A) polymerase function. In terms of tissue distribution, expressed at high levels in testis and skeletal muscle and at lower levels in brain, heart, kidney, liver, lung, ovary, pancreas, placenta, and spleen.

The protein localises to the nucleus. Its subcellular location is the cytoplasm. It is found in the cytoskeleton. It localises to the microtubule organizing center. The protein resides in the centrosome. The protein localises to the centriole. Its subcellular location is the spindle pole. During interphase, required for microtubule organizing and anchoring activities. During mitosis, required for the organization and stabilization of the spindle pole. Isoform 2/alpha is particularly important for the regulation of microtubule anchoring, microtubule stability, spindle architecture and spindle orientation, compared to isoform 1/beta. May promote cell cycle arrest by enhancing the inhibition of CDK2 activity by CDKN1A. May be required for repair of DNA damage by homologous recombination in conjunction with BRCA2. May not be involved in non-homologous end joining (NHEJ). This chain is BRCA2 and CDKN1A-interacting protein (BCCIP), found in Homo sapiens (Human).